Here is a 565-residue protein sequence, read N- to C-terminus: Adenine deaminase (565 aa).

The protein belongs to the metallo-dependent hydrolases superfamily. Adenine deaminase family. It depends on Mn(2+) as a cofactor.

The catalysed reaction is adenine + H2O + H(+) = hypoxanthine + NH4(+). The protein is Adenine deaminase of Lactobacillus delbrueckii subsp. bulgaricus (strain ATCC 11842 / DSM 20081 / BCRC 10696 / JCM 1002 / NBRC 13953 / NCIMB 11778 / NCTC 12712 / WDCM 00102 / Lb 14).